The primary structure comprises 396 residues: Apurinic-apyrimidinic endonuclease (396 aa).

Residues 31–41 are compositionally biased toward basic residues; the sequence is KGRGKIQKHIQ. Positions 31 to 100 are disordered; the sequence is KGRGKIQKHI…TSGETIAQKK (70 aa). Residues 55–70 show a composition bias toward polar residues; that stretch reads NQSPGTTVEETLTEEN. Over residues 72 to 85 the composition is skewed to basic and acidic residues; it reads STDKEETSKLENKP. Zn(2+)-binding residues include His-185, His-225, Glu-261, Asp-295, His-298, His-332, Asp-345, His-347, and Glu-377.

It belongs to the AP endonuclease 2 family. Zn(2+) is required as a cofactor.

The protein resides in the nucleus. This is Apurinic-apyrimidinic endonuclease (apn-1) from Caenorhabditis elegans.